Reading from the N-terminus, the 330-residue chain is Inorganic pyrophosphatase 2, mitochondrial (330 aa).

The N-terminal 27 residues, 1–27, are a transit peptide targeting the mitochondrion; the sequence is MRALLPLLSVGRGWRVGAAARPPRRVM. Positions 159, 164, and 196 each coordinate Mg(2+). Lys-211 is modified (N6-succinyllysine). Lys-219 carries the N6-acetyllysine modification. Lys-254 is subject to N6-succinyllysine. Residue Lys-256 is modified to N6-acetyllysine.

Belongs to the PPase family. In terms of assembly, homodimer. Mg(2+) is required as a cofactor.

The protein resides in the mitochondrion. The catalysed reaction is diphosphate + H2O = 2 phosphate + H(+). Its function is as follows. Hydrolyzes inorganic pyrophosphate. This activity is essential for correct regulation of mitochondrial membrane potential, and mitochondrial organization and function. The chain is Inorganic pyrophosphatase 2, mitochondrial (Ppa2) from Mus musculus (Mouse).